A 344-amino-acid chain; its full sequence is Ferrochelatase (344 aa).

Fe cation is bound by residues histidine 214 and glutamate 295.

Belongs to the ferrochelatase family.

Its subcellular location is the cytoplasm. It carries out the reaction heme b + 2 H(+) = protoporphyrin IX + Fe(2+). Its pathway is porphyrin-containing compound metabolism; protoheme biosynthesis; protoheme from protoporphyrin-IX: step 1/1. Its function is as follows. Catalyzes the ferrous insertion into protoporphyrin IX. The chain is Ferrochelatase from Allorhizobium ampelinum (strain ATCC BAA-846 / DSM 112012 / S4) (Agrobacterium vitis (strain S4)).